The sequence spans 86 residues: MKTLLLTLVVLTIACLDLGYTKTCFNDNLANPKTTELCRHSMYFCFKNSWIAGGVERIERGCSLTCPDIKYNGKYIYCCTRDNCNA.

The signal sequence occupies residues methionine 1–threonine 21. 4 cysteine pairs are disulfide-bonded: cysteine 24–cysteine 45, cysteine 38–cysteine 62, cysteine 66–cysteine 78, and cysteine 79–cysteine 84.

Belongs to the three-finger toxin family. Short-chain subfamily. Orphan group IX sub-subfamily. In terms of tissue distribution, expressed by the venom gland.

It localises to the secreted. This Bungarus candidus (Malayan krait) protein is Candiduxin-2.